We begin with the raw amino-acid sequence, 289 residues long: MEISEKAPAKLNLSLDTPFRHQDGEPEWRMVMTAIDLSDYVHIKTIPNSKEITVQTNTGFLPCDQRNLAYQAAKLLQSKLDKPEGVEIEIDKHIPVSAGMGGGSADAAAVLRGLNKIWNLNMSREELAKLALTIDSDVPFCVYSEPALVTGRGEKITPIGPLPPMWLVIAKPQASVSTPTILRQIHEQHLNHQEVQNVVSAIKQQDFDKMCRHMGNALEPITMKKCPDIIKIKDKMLQFGADAAQMSGSGPTVFGISQKKSRATHIYNSLRGFCKEVYLVRALDSLTTK.

Residue lysine 10 is part of the active site. 95–105 contacts ATP; that stretch reads PVSAGMGGGSA. Residue aspartate 137 is part of the active site.

Belongs to the GHMP kinase family. IspE subfamily.

It carries out the reaction 4-CDP-2-C-methyl-D-erythritol + ATP = 4-CDP-2-C-methyl-D-erythritol 2-phosphate + ADP + H(+). It participates in isoprenoid biosynthesis; isopentenyl diphosphate biosynthesis via DXP pathway; isopentenyl diphosphate from 1-deoxy-D-xylulose 5-phosphate: step 3/6. In terms of biological role, catalyzes the phosphorylation of the position 2 hydroxy group of 4-diphosphocytidyl-2C-methyl-D-erythritol. The sequence is that of 4-diphosphocytidyl-2-C-methyl-D-erythritol kinase from Ligilactobacillus salivarius (strain UCC118) (Lactobacillus salivarius).